Reading from the N-terminus, the 159-residue chain is Ribosomal RNA large subunit methyltransferase H (159 aa).

S-adenosyl-L-methionine-binding positions include Leu-76, Gly-108, and 127–132 (FGLLTL).

This sequence belongs to the RNA methyltransferase RlmH family. In terms of assembly, homodimer.

The protein resides in the cytoplasm. The catalysed reaction is pseudouridine(1915) in 23S rRNA + S-adenosyl-L-methionine = N(3)-methylpseudouridine(1915) in 23S rRNA + S-adenosyl-L-homocysteine + H(+). Specifically methylates the pseudouridine at position 1915 (m3Psi1915) in 23S rRNA. This Streptococcus pyogenes serotype M12 (strain MGAS2096) protein is Ribosomal RNA large subunit methyltransferase H.